Reading from the N-terminus, the 175-residue chain is tRNA (cytidine(56)-2'-O)-methyltransferase (175 aa).

L82 contributes to the S-adenosyl-L-methionine binding site.

The protein belongs to the aTrm56 family. In terms of assembly, homodimer.

The protein localises to the cytoplasm. It carries out the reaction cytidine(56) in tRNA + S-adenosyl-L-methionine = 2'-O-methylcytidine(56) in tRNA + S-adenosyl-L-homocysteine + H(+). Functionally, specifically catalyzes the AdoMet-dependent 2'-O-ribose methylation of cytidine at position 56 in tRNAs. In Cenarchaeum symbiosum (strain A), this protein is tRNA (cytidine(56)-2'-O)-methyltransferase.